Reading from the N-terminus, the 394-residue chain is Na(+)/H(+) antiporter NhaA (394 aa).

11 consecutive transmembrane segments (helical) span residues 17–37 (ILLM…LAGV), 59–79 (LLLW…GLEV), 95–115 (SLPS…YLAF), 124–144 (VGWA…MALL), 154–174 (VFLL…IALF), 177–197 (TDLS…MVAL), 213–233 (FILW…GVII), 261–281 (FMIL…NMTL), 287–307 (PITL…VLLF), 328–348 (IIPV…IASL), and 363–383 (LGIL…LAKV).

This sequence belongs to the NhaA Na(+)/H(+) (TC 2.A.33) antiporter family.

It localises to the cell inner membrane. The enzyme catalyses Na(+)(in) + 2 H(+)(out) = Na(+)(out) + 2 H(+)(in). Its function is as follows. Na(+)/H(+) antiporter that extrudes sodium in exchange for external protons. In Shewanella frigidimarina (strain NCIMB 400), this protein is Na(+)/H(+) antiporter NhaA.